The following is a 459-amino-acid chain: Bifunctional protein GlmU (459 aa).

The interval 1 to 230 (MSNRFAVILA…FDETLGVNDR (230 aa)) is pyrophosphorylase. UDP-N-acetyl-alpha-D-glucosamine contacts are provided by residues 9–12 (LAAG), Lys23, Gln73, and 78–79 (GT). Asp103 lines the Mg(2+) pocket. Gly140, Glu155, Asn170, and Asn228 together coordinate UDP-N-acetyl-alpha-D-glucosamine. Asn228 is a binding site for Mg(2+). The linker stretch occupies residues 231-251 (VALSQAEIIMKNRINRKNMVN). Positions 252 to 459 (GVTIIDPSNT…VDQLLNKKKS (208 aa)) are N-acetyltransferase. UDP-N-acetyl-alpha-D-glucosamine-binding residues include Arg333 and Lys351. His363 serves as the catalytic Proton acceptor. UDP-N-acetyl-alpha-D-glucosamine contacts are provided by Tyr366 and Asn377. Acetyl-CoA is bound by residues 386-387 (NY), Ala423, and Arg440.

The protein in the N-terminal section; belongs to the N-acetylglucosamine-1-phosphate uridyltransferase family. It in the C-terminal section; belongs to the transferase hexapeptide repeat family. Homotrimer. Mg(2+) serves as cofactor.

It localises to the cytoplasm. It catalyses the reaction alpha-D-glucosamine 1-phosphate + acetyl-CoA = N-acetyl-alpha-D-glucosamine 1-phosphate + CoA + H(+). The enzyme catalyses N-acetyl-alpha-D-glucosamine 1-phosphate + UTP + H(+) = UDP-N-acetyl-alpha-D-glucosamine + diphosphate. Its pathway is nucleotide-sugar biosynthesis; UDP-N-acetyl-alpha-D-glucosamine biosynthesis; N-acetyl-alpha-D-glucosamine 1-phosphate from alpha-D-glucosamine 6-phosphate (route II): step 2/2. It functions in the pathway nucleotide-sugar biosynthesis; UDP-N-acetyl-alpha-D-glucosamine biosynthesis; UDP-N-acetyl-alpha-D-glucosamine from N-acetyl-alpha-D-glucosamine 1-phosphate: step 1/1. It participates in bacterial outer membrane biogenesis; LPS lipid A biosynthesis. Its function is as follows. Catalyzes the last two sequential reactions in the de novo biosynthetic pathway for UDP-N-acetylglucosamine (UDP-GlcNAc). The C-terminal domain catalyzes the transfer of acetyl group from acetyl coenzyme A to glucosamine-1-phosphate (GlcN-1-P) to produce N-acetylglucosamine-1-phosphate (GlcNAc-1-P), which is converted into UDP-GlcNAc by the transfer of uridine 5-monophosphate (from uridine 5-triphosphate), a reaction catalyzed by the N-terminal domain. The protein is Bifunctional protein GlmU of Bacillus mycoides (strain KBAB4) (Bacillus weihenstephanensis).